The sequence spans 408 residues: Arginine biosynthesis bifunctional protein ArgJ (408 aa).

T158, K184, T195, E281, N403, and T408 together coordinate substrate. Residue T195 is the Nucleophile of the active site.

Belongs to the ArgJ family. Heterotetramer of two alpha and two beta chains.

The protein resides in the cytoplasm. It catalyses the reaction N(2)-acetyl-L-ornithine + L-glutamate = N-acetyl-L-glutamate + L-ornithine. The catalysed reaction is L-glutamate + acetyl-CoA = N-acetyl-L-glutamate + CoA + H(+). It participates in amino-acid biosynthesis; L-arginine biosynthesis; L-ornithine and N-acetyl-L-glutamate from L-glutamate and N(2)-acetyl-L-ornithine (cyclic): step 1/1. Its pathway is amino-acid biosynthesis; L-arginine biosynthesis; N(2)-acetyl-L-ornithine from L-glutamate: step 1/4. Functionally, catalyzes two activities which are involved in the cyclic version of arginine biosynthesis: the synthesis of N-acetylglutamate from glutamate and acetyl-CoA as the acetyl donor, and of ornithine by transacetylation between N(2)-acetylornithine and glutamate. The chain is Arginine biosynthesis bifunctional protein ArgJ from Bacillus cereus (strain ATCC 14579 / DSM 31 / CCUG 7414 / JCM 2152 / NBRC 15305 / NCIMB 9373 / NCTC 2599 / NRRL B-3711).